A 354-amino-acid chain; its full sequence is UDP-N-acetylglucosamine--N-acetylmuramyl-(pentapeptide) pyrophosphoryl-undecaprenol N-acetylglucosamine transferase 3 (354 aa).

Residues 12–14 (TAG), Arg-163, Ser-193, and Gln-287 contribute to the UDP-N-acetyl-alpha-D-glucosamine site.

It belongs to the glycosyltransferase 28 family. MurG subfamily.

It is found in the cell membrane. The catalysed reaction is di-trans,octa-cis-undecaprenyl diphospho-N-acetyl-alpha-D-muramoyl-L-alanyl-D-glutamyl-meso-2,6-diaminopimeloyl-D-alanyl-D-alanine + UDP-N-acetyl-alpha-D-glucosamine = di-trans,octa-cis-undecaprenyl diphospho-[N-acetyl-alpha-D-glucosaminyl-(1-&gt;4)]-N-acetyl-alpha-D-muramoyl-L-alanyl-D-glutamyl-meso-2,6-diaminopimeloyl-D-alanyl-D-alanine + UDP + H(+). Its pathway is cell wall biogenesis; peptidoglycan biosynthesis. Its function is as follows. Cell wall formation. Catalyzes the transfer of a GlcNAc subunit on undecaprenyl-pyrophosphoryl-MurNAc-pentapeptide (lipid intermediate I) to form undecaprenyl-pyrophosphoryl-MurNAc-(pentapeptide)GlcNAc (lipid intermediate II). In Bacillus cereus (strain ATCC 14579 / DSM 31 / CCUG 7414 / JCM 2152 / NBRC 15305 / NCIMB 9373 / NCTC 2599 / NRRL B-3711), this protein is UDP-N-acetylglucosamine--N-acetylmuramyl-(pentapeptide) pyrophosphoryl-undecaprenol N-acetylglucosamine transferase 3.